The primary structure comprises 402 residues: Tryptophan synthase beta chain (402 aa).

Lys-91 is modified (N6-(pyridoxal phosphate)lysine).

The protein belongs to the TrpB family. In terms of assembly, tetramer of two alpha and two beta chains. The cofactor is pyridoxal 5'-phosphate.

The enzyme catalyses (1S,2R)-1-C-(indol-3-yl)glycerol 3-phosphate + L-serine = D-glyceraldehyde 3-phosphate + L-tryptophan + H2O. The protein operates within amino-acid biosynthesis; L-tryptophan biosynthesis; L-tryptophan from chorismate: step 5/5. The beta subunit is responsible for the synthesis of L-tryptophan from indole and L-serine. The sequence is that of Tryptophan synthase beta chain (trpB) from Lactococcus lactis subsp. lactis (strain IL1403) (Streptococcus lactis).